Consider the following 1522-residue polypeptide: DNA topoisomerase 2-binding protein 1 (1522 aa).

2 consecutive BRCT domains span residues 101–189 (VYNM…RYTD) and 195–284 (FKCP…IYKT). Thr-298 carries the phosphothreonine modification. Ser-301 bears the Phosphoserine mark. BRCT domains are found at residues 354-444 (APED…PYIH), 548-633 (TEEG…SNPL), and 641-738 (TGMT…HFLI). The segment at 756–891 (INLNSDTAEH…AVALSASPQL (136 aa)) is interaction with CIP2A. 2 positions are modified to phosphothreonine: Thr-779 and Thr-848. Positions 852-858 (PSQQKRK) match the Nuclear localization signal motif. Residue Ser-860 is modified to Phosphoserine. Thr-861 carries the phosphothreonine modification. Residues Ser-864, Ser-886, and Ser-888 each carry the phosphoserine modification. One can recognise a BRCT 6 domain in the interval 900–991 (EAPKPLHKVV…KHLPESLYPH (92 aa)). Ser-1002 carries the phosphoserine modification. A disordered region spans residues 1018-1058 (VSSTKDDEPDPLILEENDVDNMATNNKESAPSNGSGKNDSK). The span at 1024–1036 (DEPDPLILEENDV) shows a compositional bias: acidic residues. The segment covering 1039 to 1058 (MATNNKESAPSNGSGKNDSK) has biased composition (polar residues). Phosphothreonine is present on residues Thr-1062 and Thr-1064. A compositionally biased stretch (polar residues) spans 1083 to 1114 (SIVKPQGQRTSLSRSGCNSASSTPDSTRSARS). Positions 1083 to 1118 (SIVKPQGQRTSLSRSGCNSASSTPDSTRSARSGRSR) are disordered. BRCT domains are found at residues 1259–1351 (ETHE…DYEW) and 1389–1486 (IVEG…NYCL). The tract at residues 1501–1522 (TGLSQKRKAPTEKNKIKRPRVH) is disordered. Phosphoserine is present on Ser-1504. The Nuclear localization signal motif lies at 1517 to 1520 (KRPR).

Belongs to the TOPBP1 family. In terms of assembly, interacts (via BRCT domains 1 and 2) with (phosphorylated) MDC1; promoting TOPBP1 recruitment to DNA damage sites during mitosis. Interacts (via BRCT domains 7 and 8) with (autophosphorylated) ATR; promoting activation of ATR. Interacts (via BRCT domains 7 and 8) with (phosphorylated) POLQ; specifically binds POLQ phosphorylated by PLK1, promoting POLQ recruitment to DNA damage sites. Interacts (via BRCT domains 1 and 2) with (phosphorylated) RAD9A. Interacts (via BRCT domain 2) with (phosphorylated) TP53BP1. Interacts (via BRCT domain 2) with (phosphorylated) HTATSF1. Interacts (via BRCT domains 7 and 8) with (phosphorylated) RAD51; promoting RAD51 recruitment to damaged chromatin. Interacts with CIP2A; forming the CIP2A-TOPBP1 complex. Interacts with POLE. Interacts with UBR5. Interacts with E2F1. Interacts with PML. Interacts with SMARCA2. Interacts with SMARCA4. Interacts with RHNO1. May interact with TOP2B. Interacts with TICRR. Interacts with HELB. Interacts (via residues 1233-1522) with RECQL4. In terms of processing, phosphorylated on serine and threonine residues in response to X-ray irradiation. Ubiquitinated and degraded by the proteasome. X-ray irradiation reduces ubiquitination. Deubiquitinated by USP13; leading to TOPBP1 stabilizion and activation of the ATR-TOPBP1 axis pathway. In terms of tissue distribution, highly expressed in heart, brain, placenta, lung and kidney.

Its subcellular location is the nucleus. The protein localises to the chromosome. The protein resides in the cytoplasm. It localises to the cytoskeleton. It is found in the microtubule organizing center. Its subcellular location is the centrosome. The protein localises to the spindle pole. Its function is as follows. Scaffold protein that acts as a key protein-protein adapter in DNA replication and DNA repair. Composed of multiple BRCT domains, which specifically recognize and bind phosphorylated proteins, bringing proteins together into functional combinations. Required for DNA replication initiation but not for the formation of pre-replicative complexes or the elongation stages. Necessary for the loading of replication factors onto chromatin, including GMNC, CDC45, DNA polymerases and components of the GINS complex. Plays a central role in DNA repair by bridging proteins and promoting recruitment of proteins to DNA damage sites. Involved in double-strand break (DSB) repair via homologous recombination in S-phase by promoting the exchange between the DNA replication factor A (RPA) complex and RAD51. Mechanistically, TOPBP1 is recruited to DNA damage sites in S-phase via interaction with phosphorylated HTATSF1, and promotes the loading of RAD51, thereby facilitating RAD51 nucleofilaments formation and RPA displacement, followed by homologous recombination. Involved in microhomology-mediated end-joining (MMEJ) DNA repair by promoting recruitment of polymerase theta (POLQ) to DNA damage sites during mitosis. MMEJ is an alternative non-homologous end-joining (NHEJ) machinery that takes place during mitosis to repair DSBs in DNA that originate in S-phase. Recognizes and binds POLQ phosphorylated by PLK1, enabling its recruitment to DSBs for subsequent repair. Involved in G1 DNA damage checkpoint by acting as a molecular adapter that couples TP53BP1 and the 9-1-1 complex. In response to DNA damage, triggers the recruitment of checkpoint signaling proteins on chromatin, which activate the CHEK1 signaling pathway and block S-phase progression. Acts as an activator of the kinase activity of ATR. Also required for chromosomal stability when DSBs occur during mitosis by forming filamentous assemblies that bridge MDC1 and tether broken chromosomes during mitosis. Together with CIP2A, plays an essential role in the response to genome instability generated by the presence of acentric chromosome fragments derived from shattered chromosomes within micronuclei. Micronuclei, which are frequently found in cancer cells, consist of chromatin surrounded by their own nuclear membrane: following breakdown of the micronuclear envelope, a process associated with chromothripsis, the CIP2A-TOPBP1 complex tethers chromosome fragments during mitosis to ensure clustered segregation of the fragments to a single daughter cell nucleus, facilitating re-ligation with limited chromosome scattering and loss. Recruits the SWI/SNF chromatin remodeling complex to E2F1-responsive promoters, thereby down-regulating E2F1 activity and inhibiting E2F1-dependent apoptosis during G1/S transition and after DNA damage. The polypeptide is DNA topoisomerase 2-binding protein 1 (Homo sapiens (Human)).